A 977-amino-acid polypeptide reads, in one-letter code: Ephrin type-A receptor 1 (977 aa).

An N-terminal signal peptide occupies residues methionine 1 to alanine 26. Residues glutamate 27–glutamate 548 lie on the Extracellular side of the membrane. One can recognise an Eph LBD domain in the interval glutamate 28–histidine 210. Fibronectin type-III domains lie at proline 333–alanine 446 and serine 448–proline 539. 2 N-linked (GlcNAc...) asparagine glycosylation sites follow: asparagine 415 and asparagine 479. Residues isoleucine 549–phenylalanine 569 traverse the membrane as a helical segment. At arginine 570 to aspartate 977 the chain is on the cytoplasmic side. Residues tyrosine 600 and tyrosine 606 each carry the phosphotyrosine; by autocatalysis modification. One can recognise a Protein kinase domain in the interval leucine 625–leucine 885. ATP contacts are provided by residues isoleucine 631–valine 639 and lysine 657. Aspartate 750 serves as the catalytic Proton acceptor. Phosphotyrosine; by autocatalysis is present on tyrosine 782. 2 positions are modified to phosphoserine: serine 907 and serine 911. The region spanning isoleucine 914–aspartate 977 is the SAM domain. A PDZ-binding motif is present at residues phenylalanine 975–aspartate 977.

The protein belongs to the protein kinase superfamily. Tyr protein kinase family. Ephrin receptor subfamily. In terms of assembly, homodimer. Forms a signaling complex with LCK; PTK2B/PYK2 and PI3-kinase upon activation by EFNA1; regulates T-lymphocytes migration. Interacts (via SAM domain) with ILK (via ANK repeats); stimulated by EFNA1 but independent of the kinase activity of EPHA1. Interacts (kinase activity-dependent) with PTK2/FAK1. Phosphorylated. Autophosphorylation is stimulated by its ligand EFNA1. Post-translationally, ubiquitinated. In terms of tissue distribution, preferentially expressed in epithelial cells including skin, kidney, liver and thymus. Expressed in myogenic progenitor cells.

The protein resides in the cell membrane. It catalyses the reaction L-tyrosyl-[protein] + ATP = O-phospho-L-tyrosyl-[protein] + ADP + H(+). Functionally, receptor tyrosine kinase which binds promiscuously membrane-bound ephrin-A family ligands residing on adjacent cells, leading to contact-dependent bidirectional signaling into neighboring cells. The signaling pathway downstream of the receptor is referred to as forward signaling while the signaling pathway downstream of the ephrin ligand is referred to as reverse signaling. Binds with a low affinity EFNA3 and EFNA4 and with a high affinity to EFNA1 which most probably constitutes its cognate/functional ligand. Upon activation by EFNA1 induces cell attachment to the extracellular matrix inhibiting cell spreading and motility through regulation of ILK and downstream RHOA and RAC. Also plays a role in angiogenesis and regulates cell proliferation. May play a role in apoptosis. The sequence is that of Ephrin type-A receptor 1 (Epha1) from Mus musculus (Mouse).